The chain runs to 871 residues: Isoleucine--tRNA ligase (871 aa).

The short motif at 57–67 is the 'HIGH' region element; it reads PYANGNLHMGH. Glutamate 554 is an L-isoleucyl-5'-AMP binding site. Residues 595 to 599 carry the 'KMSKS' region motif; the sequence is KMSKS. Lysine 598 lines the ATP pocket.

The protein belongs to the class-I aminoacyl-tRNA synthetase family. IleS type 1 subfamily. In terms of assembly, monomer.

The protein localises to the cytoplasm. It carries out the reaction tRNA(Ile) + L-isoleucine + ATP = L-isoleucyl-tRNA(Ile) + AMP + diphosphate. Functionally, catalyzes the attachment of isoleucine to tRNA(Ile). As IleRS can inadvertently accommodate and process structurally similar amino acids such as valine, to avoid such errors it has two additional distinct tRNA(Ile)-dependent editing activities. One activity is designated as 'pretransfer' editing and involves the hydrolysis of activated Val-AMP. The other activity is designated 'posttransfer' editing and involves deacylation of mischarged Val-tRNA(Ile). In Staphylococcus epidermidis, this protein is Isoleucine--tRNA ligase.